The sequence spans 232 residues: Ribosomal RNA small subunit methyltransferase G (232 aa).

A disordered region spans residues 1–24 (MVDTALHPIPGRRTPPHPRSTLPL). Residues Gly-91, Leu-96, 142–143 (AE), and Arg-160 each bind S-adenosyl-L-methionine.

It belongs to the methyltransferase superfamily. RNA methyltransferase RsmG family.

Its subcellular location is the cytoplasm. In terms of biological role, specifically methylates the N7 position of guanine in position 518 of 16S rRNA. In Corynebacterium efficiens (strain DSM 44549 / YS-314 / AJ 12310 / JCM 11189 / NBRC 100395), this protein is Ribosomal RNA small subunit methyltransferase G.